The chain runs to 247 residues: Coproheme decarboxylase (247 aa).

Fe-coproporphyrin III contacts are provided by residues Arg-129, 143-147 (YPMDK), His-170, Gln-183, and Ser-221. Tyr-143 is an active-site residue.

Belongs to the ChdC family. Type 1 subfamily. The cofactor is Fe-coproporphyrin III.

The catalysed reaction is Fe-coproporphyrin III + 2 H2O2 + 2 H(+) = heme b + 2 CO2 + 4 H2O. The enzyme catalyses Fe-coproporphyrin III + H2O2 + H(+) = harderoheme III + CO2 + 2 H2O. It catalyses the reaction harderoheme III + H2O2 + H(+) = heme b + CO2 + 2 H2O. It functions in the pathway porphyrin-containing compound metabolism; protoheme biosynthesis. Its function is as follows. Involved in coproporphyrin-dependent heme b biosynthesis. Catalyzes the decarboxylation of Fe-coproporphyrin III (coproheme) to heme b (protoheme IX), the last step of the pathway. The reaction occurs in a stepwise manner with a three-propionate intermediate. This Bacillus mycoides (strain KBAB4) (Bacillus weihenstephanensis) protein is Coproheme decarboxylase.